A 73-amino-acid polypeptide reads, in one-letter code: Acyl carrier protein (73 aa).

Residues Met-1 to Lys-73 enclose the Carrier domain. At Ser-35 the chain carries O-(pantetheine 4'-phosphoryl)serine.

The protein belongs to the acyl carrier protein (ACP) family. Post-translationally, 4'-phosphopantetheine is transferred from CoA to a specific serine of apo-ACP by AcpS. This modification is essential for activity because fatty acids are bound in thioester linkage to the sulfhydryl of the prosthetic group.

It is found in the cytoplasm. The protein operates within lipid metabolism; fatty acid biosynthesis. Functionally, carrier of the growing fatty acid chain in fatty acid biosynthesis. The sequence is that of Acyl carrier protein from Lactococcus lactis subsp. lactis (strain IL1403) (Streptococcus lactis).